The chain runs to 357 residues: GTPase Obg (357 aa).

In terms of domain architecture, Obg spans M1–L159. The 184-residue stretch at A160–E343 folds into the OBG-type G domain. GTP contacts are provided by residues G166–S173, F191–Y195, D213–G216, N293–D296, and S324–V326. The Mg(2+) site is built by S173 and T193.

This sequence belongs to the TRAFAC class OBG-HflX-like GTPase superfamily. OBG GTPase family. Monomer. Requires Mg(2+) as cofactor.

The protein localises to the cytoplasm. In terms of biological role, an essential GTPase which binds GTP, GDP and possibly (p)ppGpp with moderate affinity, with high nucleotide exchange rates and a fairly low GTP hydrolysis rate. Plays a role in control of the cell cycle, stress response, ribosome biogenesis and in those bacteria that undergo differentiation, in morphogenesis control. In Xylella fastidiosa (strain M12), this protein is GTPase Obg.